A 171-amino-acid chain; its full sequence is 3-hydroxydecanoyl-[acyl-carrier-protein] dehydratase (171 aa).

The active site involves His70.

This sequence belongs to the thioester dehydratase family. FabA subfamily. Homodimer.

The protein resides in the cytoplasm. The enzyme catalyses a (3R)-hydroxyacyl-[ACP] = a (2E)-enoyl-[ACP] + H2O. It carries out the reaction (3R)-hydroxydecanoyl-[ACP] = (2E)-decenoyl-[ACP] + H2O. It catalyses the reaction (2E)-decenoyl-[ACP] = (3Z)-decenoyl-[ACP]. It participates in lipid metabolism; fatty acid biosynthesis. Functionally, necessary for the introduction of cis unsaturation into fatty acids. Catalyzes the dehydration of (3R)-3-hydroxydecanoyl-ACP to E-(2)-decenoyl-ACP and then its isomerization to Z-(3)-decenoyl-ACP. Can catalyze the dehydratase reaction for beta-hydroxyacyl-ACPs with saturated chain lengths up to 16:0, being most active on intermediate chain length. The sequence is that of 3-hydroxydecanoyl-[acyl-carrier-protein] dehydratase from Pseudomonas syringae pv. syringae (strain B728a).